The sequence spans 170 residues: Large ribosomal subunit protein bL17 (170 aa).

This sequence belongs to the bacterial ribosomal protein bL17 family. In terms of assembly, part of the 50S ribosomal subunit. Contacts protein L32.

In Azobacteroides pseudotrichonymphae genomovar. CFP2, this protein is Large ribosomal subunit protein bL17.